The sequence spans 322 residues: Lipoyl synthase (322 aa).

Positions 68, 73, 79, 94, 98, 101, and 309 each coordinate [4Fe-4S] cluster. The Radical SAM core domain maps to 80–298; that stretch reads FNHGTASFMI…RVAGVEMGFS (219 aa).

Belongs to the radical SAM superfamily. Lipoyl synthase family. The cofactor is [4Fe-4S] cluster.

It is found in the cytoplasm. It carries out the reaction [[Fe-S] cluster scaffold protein carrying a second [4Fe-4S](2+) cluster] + N(6)-octanoyl-L-lysyl-[protein] + 2 oxidized [2Fe-2S]-[ferredoxin] + 2 S-adenosyl-L-methionine + 4 H(+) = [[Fe-S] cluster scaffold protein] + N(6)-[(R)-dihydrolipoyl]-L-lysyl-[protein] + 4 Fe(3+) + 2 hydrogen sulfide + 2 5'-deoxyadenosine + 2 L-methionine + 2 reduced [2Fe-2S]-[ferredoxin]. The protein operates within protein modification; protein lipoylation via endogenous pathway; protein N(6)-(lipoyl)lysine from octanoyl-[acyl-carrier-protein]: step 2/2. Its function is as follows. Catalyzes the radical-mediated insertion of two sulfur atoms into the C-6 and C-8 positions of the octanoyl moiety bound to the lipoyl domains of lipoate-dependent enzymes, thereby converting the octanoylated domains into lipoylated derivatives. This Idiomarina loihiensis (strain ATCC BAA-735 / DSM 15497 / L2-TR) protein is Lipoyl synthase.